The sequence spans 160 residues: tRNA (cytidine(34)-2'-O)-methyltransferase (160 aa).

Residues L78, G100, I122, and S130 each coordinate S-adenosyl-L-methionine.

Belongs to the class IV-like SAM-binding methyltransferase superfamily. RNA methyltransferase TrmH family. TrmL subfamily. As to quaternary structure, homodimer.

It is found in the cytoplasm. The enzyme catalyses cytidine(34) in tRNA + S-adenosyl-L-methionine = 2'-O-methylcytidine(34) in tRNA + S-adenosyl-L-homocysteine + H(+). It catalyses the reaction 5-carboxymethylaminomethyluridine(34) in tRNA(Leu) + S-adenosyl-L-methionine = 5-carboxymethylaminomethyl-2'-O-methyluridine(34) in tRNA(Leu) + S-adenosyl-L-homocysteine + H(+). In terms of biological role, methylates the ribose at the nucleotide 34 wobble position in the two leucyl isoacceptors tRNA(Leu)(CmAA) and tRNA(Leu)(cmnm5UmAA). Catalyzes the methyl transfer from S-adenosyl-L-methionine to the 2'-OH of the wobble nucleotide. This is tRNA (cytidine(34)-2'-O)-methyltransferase from Haemophilus influenzae (strain ATCC 51907 / DSM 11121 / KW20 / Rd).